Consider the following 396-residue polypeptide: Putative nickel insertion protein (396 aa).

This sequence belongs to the LarC family.

This chain is Putative nickel insertion protein, found in Methanosarcina mazei (strain ATCC BAA-159 / DSM 3647 / Goe1 / Go1 / JCM 11833 / OCM 88) (Methanosarcina frisia).